Here is a 146-residue protein sequence, read N- to C-terminus: Hemoglobin subunit beta (146 aa).

Val-1 carries the N-acetylvaline modification. The Globin domain maps to 2-146; it reads HLTADEKTAV…VANALAHKYH (145 aa). Residue Thr-12 is modified to Phosphothreonine. Ser-44 carries the phosphoserine modification. N6-acetyllysine is present on Lys-59. Heme b is bound at residue His-63. An N6-acetyllysine modification is found at Lys-82. His-92 is a heme b binding site. Cys-93 carries the post-translational modification S-nitrosocysteine. N6-acetyllysine is present on Lys-144.

This sequence belongs to the globin family. In terms of assembly, heterotetramer of two alpha chains and two beta chains. In terms of tissue distribution, red blood cells.

In terms of biological role, involved in oxygen transport from the lung to the various peripheral tissues. This chain is Hemoglobin subunit beta (HBB), found in Procyon lotor (Raccoon).